The following is a 113-amino-acid chain: Ribonuclease P protein component (113 aa).

This sequence belongs to the RnpA family. Consists of a catalytic RNA component (M1 or rnpB) and a protein subunit.

The catalysed reaction is Endonucleolytic cleavage of RNA, removing 5'-extranucleotides from tRNA precursor.. Functionally, RNaseP catalyzes the removal of the 5'-leader sequence from pre-tRNA to produce the mature 5'-terminus. It can also cleave other RNA substrates such as 4.5S RNA. The protein component plays an auxiliary but essential role in vivo by binding to the 5'-leader sequence and broadening the substrate specificity of the ribozyme. The protein is Ribonuclease P protein component of Clostridium novyi (strain NT).